We begin with the raw amino-acid sequence, 396 residues long: Elongation factor Tu (396 aa).

Residues 10-206 enclose the tr-type G domain; it reads KPHVNIGTIG…AVDESVPEPV (197 aa). Residues 19-26 form a G1 region; the sequence is GHVDHGKT. 19 to 26 is a binding site for GTP; sequence GHVDHGKT. Thr-26 serves as a coordination point for Mg(2+). A G2 region spans residues 62–66; sequence GITIN. Positions 83-86 are G3; it reads DAPG. GTP is bound by residues 83-87 and 138-141; these read DAPGH and NKSD. The interval 138–141 is G4; sequence NKSD. Positions 176–178 are G5; the sequence is SGL.

This sequence belongs to the TRAFAC class translation factor GTPase superfamily. Classic translation factor GTPase family. EF-Tu/EF-1A subfamily. As to quaternary structure, monomer.

It is found in the cytoplasm. The catalysed reaction is GTP + H2O = GDP + phosphate + H(+). Functionally, GTP hydrolase that promotes the GTP-dependent binding of aminoacyl-tRNA to the A-site of ribosomes during protein biosynthesis. This chain is Elongation factor Tu, found in Beutenbergia cavernae (strain ATCC BAA-8 / DSM 12333 / CCUG 43141 / JCM 11478 / NBRC 16432 / NCIMB 13614 / HKI 0122).